Reading from the N-terminus, the 438-residue chain is MALRGVSVQLLSRVPGLRVFRTWVSSAAQTEKVGRTQSQLAKSSRPEFDWRDPLVLEEQLTTDEILIRDTFRTYCQERLMPRILLANRNEVFHREIISQMGELGVLGPTIKGYGCAGVSSVAYGLLARELERVDSGYRSAMSVQSPLVMHPIYAYGSEEQRQKYLPRLAKGELLGCFGLTEPNSGSDPSSMETRARYNSSNKSYTLNGTKTWITNSPMADLFVVWARCEDGRIRGFLLEKGMRGLSAPRIQGKFSLRASATGMIIMDGVEVPEENMLPGASSLGGSFGCLNNGRYGIAWGVLGASEFCLHTARQYALDRMQFGVPLARNQLIQKKLADMLTEITLGLHACLQLGRLKDQDKAAPEMVSLLKRNNCGKALDIARQARDMLGGNGISDEYHVIRHAMNLEAVNTYEGTHDIHALILGRAITGIQAFTASK.

Residues 1–44 (MALRGVSVQLLSRVPGLRVFRTWVSSAAQTEKVGRTQSQLAKSS) constitute a mitochondrion transit peptide. Substrate contacts are provided by residues 138 to 139 (RS) and S186. FAD contacts are provided by residues 177-186 (FGLTEPNSGS), S186, and 212-214 (WIT). K240 bears the N6-acetyllysine mark. Substrate is bound at residue 287–294 (FGCLNNGR). FAD is bound by residues R319, Q330, and 387 to 391 (DMLGG). E414 acts as the Proton acceptor in catalysis. Position 415 (G415) interacts with substrate. FAD is bound by residues T416, 416–418 (THD), and F434.

Belongs to the acyl-CoA dehydrogenase family. In terms of assembly, homotetramer. FAD is required as a cofactor.

The protein resides in the mitochondrion matrix. The enzyme catalyses glutaryl-CoA + oxidized [electron-transfer flavoprotein] + 2 H(+) = (2E)-butenoyl-CoA + reduced [electron-transfer flavoprotein] + CO2. It functions in the pathway amino-acid metabolism; lysine degradation. It participates in amino-acid metabolism; tryptophan metabolism. In terms of biological role, catalyzes the oxidative decarboxylation of glutaryl-CoA to crotonyl-CoA and CO(2) in the degradative pathway of L-lysine, L-hydroxylysine, and L-tryptophan metabolism. It uses electron transfer flavoprotein as its electron acceptor. The polypeptide is Glutaryl-CoA dehydrogenase, mitochondrial (GCDH) (Macaca fascicularis (Crab-eating macaque)).